Reading from the N-terminus, the 150-residue chain is MGRCGTHTQINFLAGFVVRFNNVKTCLAQFWVNMGQNKEGNADKSSYFKVVSVILTLRGYVQLGYMVIHLVTHTLHCITLYITITHYTIYIVNIVIQLWLYRYIERFFYSLLVEYCENLCDSKEKRKVVIRFYFHFYFFFSFLFFIEKKK.

Helical transmembrane passes span 50-70 (VVSV…VIHL), 80-100 (LYIT…QLWL), and 127-147 (KVVI…FFIE).

It localises to the membrane. This is an uncharacterized protein from Schizosaccharomyces pombe (strain 972 / ATCC 24843) (Fission yeast).